The primary structure comprises 202 residues: Dephospho-CoA kinase (202 aa).

One can recognise a DPCK domain in the interval 5 to 202 (IVGLTGGIAS…DADYRARSDR (198 aa)). ATP is bound at residue 13 to 18 (ASGKSA).

This sequence belongs to the CoaE family.

The protein resides in the cytoplasm. It catalyses the reaction 3'-dephospho-CoA + ATP = ADP + CoA + H(+). The protein operates within cofactor biosynthesis; coenzyme A biosynthesis; CoA from (R)-pantothenate: step 5/5. Its function is as follows. Catalyzes the phosphorylation of the 3'-hydroxyl group of dephosphocoenzyme A to form coenzyme A. This chain is Dephospho-CoA kinase, found in Xanthomonas oryzae pv. oryzae (strain MAFF 311018).